The following is a 346-amino-acid chain: Holliday junction branch migration complex subunit RuvB (346 aa).

The large ATPase domain (RuvB-L) stretch occupies residues 1-182 (MKIELLTTPA…FGINSRFDYY (182 aa)). Residues isoleucine 21, arginine 22, glycine 63, lysine 66, threonine 67, threonine 68, 129 to 131 (EDF), arginine 172, tyrosine 182, and arginine 219 each bind ATP. Threonine 67 contributes to the Mg(2+) binding site. The interval 183 to 253 (SPDLLEGIVM…IAMKTLECLD (71 aa)) is small ATPAse domain (RuvB-S). The head domain (RuvB-H) stretch occupies residues 256–346 (EEGLDDMDKK…GLFDADGNLS (91 aa)). The DNA site is built by arginine 311 and arginine 316.

Belongs to the RuvB family. As to quaternary structure, homohexamer. Forms an RuvA(8)-RuvB(12)-Holliday junction (HJ) complex. HJ DNA is sandwiched between 2 RuvA tetramers; dsDNA enters through RuvA and exits via RuvB. An RuvB hexamer assembles on each DNA strand where it exits the tetramer. Each RuvB hexamer is contacted by two RuvA subunits (via domain III) on 2 adjacent RuvB subunits; this complex drives branch migration. In the full resolvosome a probable DNA-RuvA(4)-RuvB(12)-RuvC(2) complex forms which resolves the HJ.

The protein resides in the cytoplasm. It carries out the reaction ATP + H2O = ADP + phosphate + H(+). Its function is as follows. The RuvA-RuvB-RuvC complex processes Holliday junction (HJ) DNA during genetic recombination and DNA repair, while the RuvA-RuvB complex plays an important role in the rescue of blocked DNA replication forks via replication fork reversal (RFR). RuvA specifically binds to HJ cruciform DNA, conferring on it an open structure. The RuvB hexamer acts as an ATP-dependent pump, pulling dsDNA into and through the RuvAB complex. RuvB forms 2 homohexamers on either side of HJ DNA bound by 1 or 2 RuvA tetramers; 4 subunits per hexamer contact DNA at a time. Coordinated motions by a converter formed by DNA-disengaged RuvB subunits stimulates ATP hydrolysis and nucleotide exchange. Immobilization of the converter enables RuvB to convert the ATP-contained energy into a lever motion, pulling 2 nucleotides of DNA out of the RuvA tetramer per ATP hydrolyzed, thus driving DNA branch migration. The RuvB motors rotate together with the DNA substrate, which together with the progressing nucleotide cycle form the mechanistic basis for DNA recombination by continuous HJ branch migration. Branch migration allows RuvC to scan DNA until it finds its consensus sequence, where it cleaves and resolves cruciform DNA. This Chlorobium phaeovibrioides (strain DSM 265 / 1930) (Prosthecochloris vibrioformis (strain DSM 265)) protein is Holliday junction branch migration complex subunit RuvB.